A 143-amino-acid chain; its full sequence is Large ribosomal subunit protein uL11 (143 aa).

The protein belongs to the universal ribosomal protein uL11 family. Part of the ribosomal stalk of the 50S ribosomal subunit. Interacts with L10 and the large rRNA to form the base of the stalk. L10 forms an elongated spine to which L12 dimers bind in a sequential fashion forming a multimeric L10(L12)X complex. In terms of processing, one or more lysine residues are methylated.

Forms part of the ribosomal stalk which helps the ribosome interact with GTP-bound translation factors. This is Large ribosomal subunit protein uL11 from Thioalkalivibrio sulfidiphilus (strain HL-EbGR7).